The primary structure comprises 81 residues: MAHSVKIYDTCIGCTQCVRACPTDVLEMVPWNGCRAKQIASAPRTEDCVGCKRCESACPTDYLSVRVYLRNETTRSMGLAY.

2 4Fe-4S ferredoxin-type domains span residues 2-31 (AHSV…MVPW) and 39-68 (IASA…VRVY). Cys-11, Cys-14, Cys-17, Cys-21, Cys-48, Cys-51, Cys-54, and Cys-58 together coordinate [4Fe-4S] cluster.

In terms of assembly, the eukaryotic PSI reaction center is composed of at least 11 subunits. [4Fe-4S] cluster serves as cofactor.

It localises to the plastid. Its subcellular location is the chloroplast thylakoid membrane. It carries out the reaction reduced [plastocyanin] + hnu + oxidized [2Fe-2S]-[ferredoxin] = oxidized [plastocyanin] + reduced [2Fe-2S]-[ferredoxin]. In terms of biological role, apoprotein for the two 4Fe-4S centers FA and FB of photosystem I (PSI); essential for photochemical activity. FB is the terminal electron acceptor of PSI, donating electrons to ferredoxin. The C-terminus interacts with PsaA/B/D and helps assemble the protein into the PSI complex. Required for binding of PsaD and PsaE to PSI. PSI is a plastocyanin-ferredoxin oxidoreductase, converting photonic excitation into a charge separation, which transfers an electron from the donor P700 chlorophyll pair to the spectroscopically characterized acceptors A0, A1, FX, FA and FB in turn. The chain is Photosystem I iron-sulfur center from Gnetum parvifolium (Small-leaved jointfir).